The sequence spans 420 residues: Calsequestrin-1 (420 aa).

Positions Met-1 to Gly-22 are cleaved as a signal peptide. N-linked (GlcNAc...) asparagine glycosylation occurs at Asn-338. The disordered stretch occupies residues Leu-369–Asp-420.

This sequence belongs to the calsequestrin family. Monomer; increases in response to a depletion of intracellular calcium. Homodimer. Homotetramer and homopolymer. Can form linear homooligomers. Ca(2+) ions promote oligomerization. In terms of tissue distribution, detected in skeletal muscle (at protein level). Detected in skeletal muscle.

The protein localises to the endoplasmic reticulum. The protein resides in the sarcoplasmic reticulum. Its subcellular location is the sarcoplasmic reticulum lumen. It localises to the sarcoplasmic reticulum membrane. It is found in the mitochondrion matrix. Functionally, calsequestrin is a high-capacity, moderate affinity, calcium-binding protein and thus acts as an internal calcium store in muscle. Calcium ions are bound by clusters of acidic residues at the protein surface, often at the interface between subunits. Can bind around 80 Ca(2+) ions. Regulates the release of lumenal Ca(2+) via the calcium release channel RYR1; this plays an important role in triggering muscle contraction. Negatively regulates store-operated Ca(2+) entry (SOCE) activity. This Pelophylax lessonae (Pool frog) protein is Calsequestrin-1.